The sequence spans 316 residues: Cytochrome c biogenesis protein CcsA (316 aa).

8 helical membrane-spanning segments follow: residues 19 to 39, 47 to 67, 77 to 97, 106 to 126, 151 to 171, 224 to 244, 258 to 275, and 285 to 305; these read VLTL…FSFW, SSIV…QLVF, ISNL…IQLL, LIQA…SFVL, VIMC…VVLL, TITF…VWAN, TWAF…HTRL, and AIIA…VNFL.

Belongs to the CcmF/CycK/Ccl1/NrfE/CcsA family. May interact with ccs1.

It localises to the cellular thylakoid membrane. Functionally, required during biogenesis of c-type cytochromes (cytochrome c6 and cytochrome f) at the step of heme attachment. This chain is Cytochrome c biogenesis protein CcsA, found in Prochlorococcus marinus (strain SARG / CCMP1375 / SS120).